Here is a 406-residue protein sequence, read N- to C-terminus: uncharacterized protein (406 aa).

Helical transmembrane passes span 7 to 27 (SILF…MVVI), 43 to 63 (VTLI…LITI), 69 to 89 (LTII…FYAL), 98 to 118 (LILV…FSPL), 155 to 175 (GLII…FLLF), 220 to 240 (IIIM…SVSL), 253 to 273 (WWGF…FIIY), 297 to 317 (LTLI…VLFM), 352 to 372 (VQFI…FLGV), and 374 to 394 (LVYV…FSQL).

This sequence belongs to the major facilitator superfamily.

It is found in the cell membrane. This is an uncharacterized protein from Bacillus subtilis (strain 168).